The following is a 680-amino-acid chain: Glutamine-dependent NAD(+) synthetase (680 aa).

Positions 12–276 (VRVAACTHHA…EHRSVADVDT (265 aa)) constitute a CN hydrolase domain. Glu-52 acts as the Proton acceptor; for glutaminase activity in catalysis. Catalysis depends on Lys-121, which acts as the For glutaminase activity. L-glutamine is bound at residue Tyr-127. Cys-176 acts as the Nucleophile; for glutaminase activity in catalysis. L-glutamine-binding residues include Ser-203 and Arg-209. 366 to 373 (GVSGGLDS) lines the ATP pocket. Position 456 (Asn-456) interacts with deamido-NAD(+). Thr-480 is an ATP binding site. Deamido-NAD(+)-binding positions include Glu-485, 490–493 (WSTY), and Lys-636.

In the C-terminal section; belongs to the NAD synthetase family.

It catalyses the reaction deamido-NAD(+) + L-glutamine + ATP + H2O = L-glutamate + AMP + diphosphate + NAD(+) + H(+). The protein operates within cofactor biosynthesis; NAD(+) biosynthesis; NAD(+) from deamido-NAD(+) (L-Gln route): step 1/1. Catalyzes the ATP-dependent amidation of deamido-NAD to form NAD. Uses L-glutamine as a nitrogen source. This is Glutamine-dependent NAD(+) synthetase from Mycobacterium leprae (strain TN).